A 660-amino-acid polypeptide reads, in one-letter code: Bifunctional polymyxin resistance protein ArnA (660 aa).

The formyltransferase ArnAFT stretch occupies residues 1–304; it reads MKAVIFAYHD…ALGLVKGALL (304 aa). H104 functions as the Proton donor; for formyltransferase activity in the catalytic mechanism. (6R)-10-formyltetrahydrofolate-binding positions include R114 and 136-140; that span reads TARAD. Positions 314–660 are dehydrogenase ArnADH; that stretch reads RRTRVLILGV…QTVDLPDAAQ (347 aa). NAD(+) is bound by residues D347 and 368-369; that span reads DI. UDP-alpha-D-glucuronate is bound by residues A393, Y398, and 432 to 433; that span reads TS. Residue E434 is the Proton acceptor; for decarboxylase activity of the active site. UDP-alpha-D-glucuronate-binding positions include R460, N492, 526 to 535, and Y613; that span reads KLVDGGAQKR. R619 functions as the Proton donor; for decarboxylase activity in the catalytic mechanism.

It in the N-terminal section; belongs to the Fmt family. UDP-L-Ara4N formyltransferase subfamily. This sequence in the C-terminal section; belongs to the NAD(P)-dependent epimerase/dehydratase family. UDP-glucuronic acid decarboxylase subfamily. As to quaternary structure, homohexamer, formed by a dimer of trimers.

The catalysed reaction is UDP-alpha-D-glucuronate + NAD(+) = UDP-beta-L-threo-pentopyranos-4-ulose + CO2 + NADH. It carries out the reaction UDP-4-amino-4-deoxy-beta-L-arabinose + (6R)-10-formyltetrahydrofolate = UDP-4-deoxy-4-formamido-beta-L-arabinose + (6S)-5,6,7,8-tetrahydrofolate + H(+). It participates in nucleotide-sugar biosynthesis; UDP-4-deoxy-4-formamido-beta-L-arabinose biosynthesis; UDP-4-deoxy-4-formamido-beta-L-arabinose from UDP-alpha-D-glucuronate: step 1/3. The protein operates within nucleotide-sugar biosynthesis; UDP-4-deoxy-4-formamido-beta-L-arabinose biosynthesis; UDP-4-deoxy-4-formamido-beta-L-arabinose from UDP-alpha-D-glucuronate: step 3/3. Its pathway is bacterial outer membrane biogenesis; lipopolysaccharide biosynthesis. In terms of biological role, bifunctional enzyme that catalyzes the oxidative decarboxylation of UDP-glucuronic acid (UDP-GlcUA) to UDP-4-keto-arabinose (UDP-Ara4O) and the addition of a formyl group to UDP-4-amino-4-deoxy-L-arabinose (UDP-L-Ara4N) to form UDP-L-4-formamido-arabinose (UDP-L-Ara4FN). The modified arabinose is attached to lipid A and is required for resistance to polymyxin and cationic antimicrobial peptides. The sequence is that of Bifunctional polymyxin resistance protein ArnA from Sodalis glossinidius (strain morsitans).